A 257-amino-acid chain; its full sequence is N-acetylglucosaminyldiphosphoundecaprenol N-acetyl-beta-D-mannosaminyltransferase (257 aa).

It belongs to the glycosyltransferase 26 family. TagA/TarA subfamily.

The enzyme catalyses UDP-N-acetyl-alpha-D-mannosamine + N-acetyl-alpha-D-glucosaminyl-di-trans,octa-cis-undecaprenyl diphosphate = N-acetyl-beta-D-mannosaminyl-(1-&gt;4)-N-acetyl-alpha-D-glucosaminyl di-trans,octa-cis-undecaprenyl diphosphate + UDP + H(+). It participates in cell wall biogenesis; poly(ribitol phosphate) teichoic acid biosynthesis. In terms of biological role, catalyzes the conversion of GlcNAc-PP-undecaprenol into ManNAc-GlcNAc-PP-undecaprenol, the first committed lipid intermediate in the de novo synthesis of teichoic acid. This is N-acetylglucosaminyldiphosphoundecaprenol N-acetyl-beta-D-mannosaminyltransferase from Bacillus spizizenii (strain ATCC 23059 / NRRL B-14472 / W23) (Bacillus subtilis subsp. spizizenii).